Consider the following 594-residue polypeptide: Solute carrier family 22 member 14 (594 aa).

Over 1-70 (MAGEENFKEE…EFGTFQQRLV (70 aa)) the chain is Cytoplasmic. The chain crosses the membrane as a helical span at residues 71-91 (ALTFIPSIMSAFFMFADHFVF). Topologically, residues 92-184 (TAQKPYCNTS…LVCGMETKKD (93 aa)) are extracellular. Residues N99, N117, N125, and N150 are each glycosylated (N-linked (GlcNAc...) asparagine). A helical transmembrane segment spans residues 185–205 (TAQIMFMAGLPIGSLIFRLIT). At 206–210 (DKMGR) the chain is on the cytoplasmic side. A helical membrane pass occupies residues 211-231 (YPAILLSLLGLIIFGFGTAFM). The Extracellular segment spans residues 232–235 (NSFH). The helical transmembrane segment at 236-256 (LYLFFRFGISQSVVGYAISSI) threads the bilayer. Over 257 to 270 (SLATEWLVGEHRAH) the chain is Cytoplasmic. Residues 271–291 (AIILGHCFFAVGAVLLTGIAY) form a helical membrane-spanning segment. Over 292–297 (SLPHWQ) the chain is Extracellular. A helical transmembrane segment spans residues 298–318 (LLFLVGGILVIPFISYIWILP). Over 319–379 (ESPRWLMMKG…DFCKNRQLCK (61 aa)) the chain is Cytoplasmic. Residues 380–400 (VTLVMSCVWFTVSYTYFTLSL) traverse the membrane as a helical segment. Residues 401-408 (RMRELGVS) lie on the Extracellular side of the membrane. The chain crosses the membrane as a helical span at residues 409 to 431 (VHFRHVVPSIMEVPARLCCIFLL). At 432–437 (QQIGRK) the chain is on the cytoplasmic side. The helical transmembrane segment at 438–458 (WSLAVTLLQAIIWCLLLLFLP) threads the bilayer. Topologically, residues 459–488 (EGEDGLRLKWPRCPATELKSMTILVLMLRE) are extracellular. A helical transmembrane segment spans residues 489-509 (FSLAATVTVFFLYTAELLPTV). The Cytoplasmic segment spans residues 510-512 (LRA). Residues 513–533 (TGLGLVSLASVAGAILSLTII) form a helical membrane-spanning segment. Residues 534–538 (SQTPS) are Extracellular-facing. Residues 539–559 (LLPIFLCCVLAIVAFSLSSLL) traverse the membrane as a helical segment. At 560–594 (PETRDQPLSESLNHSSQIRNKVKDMKTKETSSDDV) the chain is on the cytoplasmic side. Residues 566 to 594 (PLSESLNHSSQIRNKVKDMKTKETSSDDV) are disordered. Polar residues predominate over residues 567–578 (LSESLNHSSQIR). Residues 580 to 594 (KVKDMKTKETSSDDV) show a composition bias toward basic and acidic residues.

Belongs to the major facilitator (TC 2.A.1) superfamily. Organic cation transporter (TC 2.A.1.19) family. Ubiquitous.

The protein localises to the mitochondrion inner membrane. Its subcellular location is the cell projection. It localises to the cilium. The protein resides in the flagellum membrane. The enzyme catalyses riboflavin(in) = riboflavin(out). Its function is as follows. Riboflavin transporter localized at the inner mitochondrial membrane of the spermatozoa midpiece, which is required for male fertility. SLC22A14-mediated riboflavin transport is essential for spermatozoa energy generation and motility: riboflavin is the precursor of FMN and FAD, which are coenzymes of many enzymes in the TCA cycle (the citric acid cycle) in mitochondria. Required for sperm motility and normal sperm flagellar structure. This is Solute carrier family 22 member 14 from Homo sapiens (Human).